The sequence spans 206 residues: Enterobactin synthase component D (206 aa).

Residues Asp-107, Glu-109, and Glu-152 each coordinate Mg(2+).

Belongs to the P-Pant transferase superfamily. EntD family. As to quaternary structure, entB, EntD, EntE, and EntF form a multienzyme complex called enterobactin synthase. It depends on Mg(2+) as a cofactor.

It is found in the membrane. It catalyses the reaction apo-[aryl-carrier protein] + CoA = holo-[aryl-carrier protein] + adenosine 3',5'-bisphosphate + H(+). It carries out the reaction apo-[peptidyl-carrier protein] + CoA = holo-[peptidyl-carrier protein] + adenosine 3',5'-bisphosphate + H(+). The protein operates within siderophore biosynthesis; enterobactin biosynthesis. Involved in the biosynthesis of the siderophore enterobactin (enterochelin), which is a macrocyclic trimeric lactone of N-(2,3-dihydroxybenzoyl)-serine. The serine trilactone serves as a scaffolding for the three catechol functionalities that provide hexadentate coordination for the tightly ligated iron(2+) atoms. Plays an essential role in the assembly of the enterobactin by catalyzing the transfer of the 4'-phosphopantetheine (Ppant) moiety from coenzyme A to the apo-domains of both EntB (ArCP domain) and EntF (PCP domain) to yield their holo-forms which make them competent for the activation of 2,3-dihydroxybenzoate (DHB) and L-serine, respectively. The protein is Enterobactin synthase component D of Escherichia coli O157:H7.